The following is a 294-amino-acid chain: Cytidine deaminase (294 aa).

CMP/dCMP-type deaminase domains lie at 48 to 168 (DEDA…FGPK) and 186 to 294 (LTGD…VLLG). 89-91 (NME) is a substrate binding site. Histidine 102 lines the Zn(2+) pocket. Glutamate 104 functions as the Proton donor in the catalytic mechanism. Zn(2+) is bound by residues cysteine 129 and cysteine 132.

This sequence belongs to the cytidine and deoxycytidylate deaminase family. Homodimer. Zn(2+) is required as a cofactor.

It catalyses the reaction cytidine + H2O + H(+) = uridine + NH4(+). It carries out the reaction 2'-deoxycytidine + H2O + H(+) = 2'-deoxyuridine + NH4(+). In terms of biological role, this enzyme scavenges exogenous and endogenous cytidine and 2'-deoxycytidine for UMP synthesis. In Salmonella agona (strain SL483), this protein is Cytidine deaminase.